The primary structure comprises 440 residues: Probable exopolygalacturonase C (440 aa).

An N-terminal signal peptide occupies residues 1–21; it reads MLITNPALLGILASLAPLALG. N-linked (GlcNAc...) asparagine glycans are attached at residues asparagine 24, asparagine 84, asparagine 151, and asparagine 219. PbH1 repeat units follow at residues 217 to 238 and 240 to 261; these read GTNI…AVNT and SHNI…SIGS. Aspartate 231 serves as the catalytic Proton donor. Histidine 255 is a catalytic residue. Residue asparagine 271 is glycosylated (N-linked (GlcNAc...) asparagine). One copy of the PbH1 3 repeat lies at 272–293; sequence ITNLRFEDVTVIDALYAARFKS. Asparagine 313 and asparagine 350 each carry an N-linked (GlcNAc...) asparagine glycan. The cysteines at positions 389 and 395 are disulfide-linked. The N-linked (GlcNAc...) asparagine glycan is linked to asparagine 434.

This sequence belongs to the glycosyl hydrolase 28 family.

It is found in the secreted. It carries out the reaction [(1-&gt;4)-alpha-D-galacturonosyl](n) + H2O = alpha-D-galacturonate + [(1-&gt;4)-alpha-D-galacturonosyl](n-1). Specific in hydrolyzing the terminal glycosidic bond of polygalacturonic acid and oligogalacturonates. The polypeptide is Probable exopolygalacturonase C (pgxC) (Neosartorya fischeri (strain ATCC 1020 / DSM 3700 / CBS 544.65 / FGSC A1164 / JCM 1740 / NRRL 181 / WB 181) (Aspergillus fischerianus)).